The sequence spans 430 residues: Adenylosuccinate synthetase (430 aa).

GTP-binding positions include 12–18 and 40–42; these read GDEGKGK and GHT. D13 serves as the catalytic Proton acceptor. The Mg(2+) site is built by D13 and G40. IMP contacts are provided by residues 13 to 16, 38 to 41, T128, R142, Q223, T238, and R302; these read DEGK and NAGH. Catalysis depends on H41, which acts as the Proton donor. Position 298–304 (298–304) interacts with substrate; sequence TTTGRPR. GTP is bound by residues R304, 330–332, and 413–415; these read SID and SVG.

It belongs to the adenylosuccinate synthetase family. Homodimer. It depends on Mg(2+) as a cofactor.

It localises to the cytoplasm. The enzyme catalyses IMP + L-aspartate + GTP = N(6)-(1,2-dicarboxyethyl)-AMP + GDP + phosphate + 2 H(+). It participates in purine metabolism; AMP biosynthesis via de novo pathway; AMP from IMP: step 1/2. Functionally, plays an important role in the de novo pathway of purine nucleotide biosynthesis. Catalyzes the first committed step in the biosynthesis of AMP from IMP. This Lactococcus lactis subsp. cremoris (strain SK11) protein is Adenylosuccinate synthetase.